The sequence spans 118 residues: Vesicle-associated membrane protein 1 (118 aa).

Over residues 1 to 15 the composition is skewed to low complexity; it reads MSAPAQPPAEGTEGA. Positions 1 to 38 are disordered; the sequence is MSAPAQPPAEGTEGAAPGGGPPGPPPNTTSNRRLQQTQ. Topologically, residues 1–96 are cytoplasmic; that stretch reads MSAPAQPPAE…KRKYWWKNCK (96 aa). A compositionally biased stretch (polar residues) spans 28-38; that stretch reads TTSNRRLQQTQ. A v-SNARE coiled-coil homology domain is found at 33–93; that stretch reads RLQQTQAQVE…AKLKRKYWWK (61 aa). Ser-63 carries the post-translational modification Phosphoserine. A helical; Anchor for type IV membrane protein transmembrane segment spans residues 97 to 116; the sequence is MMIMLGAICAIIVVVIVIYI. Residues 117–118 are Vesicular-facing; the sequence is FT.

It belongs to the synaptobrevin family. In terms of assembly, interacts with VAPA and VAPB. Post-translationally, (Microbial infection) Targeted and hydrolyzed by C.botulinum neurotoxin type D (BoNT/D, botD) which hydrolyzes the 61-Lys-|-Leu-62 bond and inhibits neurotransmitter release. This is a poor substrate for BoNT/D, high concentrations are required to cleave it in vitro. In terms of processing, (Microbial infection) Targeted and hydrolyzed by C.botulinum neurotoxin type F (BoNT/F, botF) which hydrolyzes the 60-Gln-|-Lys-61 bond and inhibits neurotransmitter release. Expressed in brain and spleen (at protein level). Isoform 1 expressed at very high level in brain. Even higher level found in spinal cord. Isoform 3 expressed in kidney, spleen and liver. Isoforms 2 and 3 expressed in osteoblasts of trabecular bone. Also expressed in heart.

Its subcellular location is the cytoplasmic vesicle. The protein localises to the secretory vesicle. It is found in the synaptic vesicle membrane. The protein resides in the synapse. It localises to the synaptosome. Its subcellular location is the cytoplasmic vesicle membrane. The protein localises to the mitochondrion outer membrane. Its function is as follows. Involved in the targeting and/or fusion of transport vesicles to their target membrane. The chain is Vesicle-associated membrane protein 1 (Vamp1) from Rattus norvegicus (Rat).